A 389-amino-acid chain; its full sequence is Phosphatidylglycerol--prolipoprotein diacylglyceryl transferase (389 aa).

4 helical membrane-spanning segments follow: residues 28–48 (IIVA…LIYF), 58–78 (FFIF…YFLI), 98–118 (LAIQ…FNVF), and 148–168 (ISVF…QAIG). Residue arginine 169 participates in a 1,2-diacyl-sn-glycero-3-phospho-(1'-sn-glycerol) binding. A run of 3 helical transmembrane segments spans residues 220–240 (IPLF…IYFV), 281–301 (IVFS…CQTL), and 309–329 (FWTY…TTLF).

This sequence belongs to the Lgt family.

Its subcellular location is the cell membrane. It catalyses the reaction L-cysteinyl-[prolipoprotein] + a 1,2-diacyl-sn-glycero-3-phospho-(1'-sn-glycerol) = an S-1,2-diacyl-sn-glyceryl-L-cysteinyl-[prolipoprotein] + sn-glycerol 1-phosphate + H(+). The protein operates within protein modification; lipoprotein biosynthesis (diacylglyceryl transfer). Functionally, catalyzes the transfer of the diacylglyceryl group from phosphatidylglycerol to the sulfhydryl group of the N-terminal cysteine of a prolipoprotein, the first step in the formation of mature lipoproteins. The sequence is that of Phosphatidylglycerol--prolipoprotein diacylglyceryl transferase from Mycoplasma pneumoniae (strain ATCC 29342 / M129 / Subtype 1) (Mycoplasmoides pneumoniae).